A 536-amino-acid chain; its full sequence is Cytoplasmic dynein 2 intermediate chain 2 (536 aa).

At S15 the chain carries Phosphoserine. The tract at residues 80–93 (RNHVDAQVQTEAPV) is DYNLL2 binding. Residues 106–131 (PRLAAFLRRVEAMVIRELNKNWQSHA) form a DYNLRB1 binding region. WD repeat units follow at residues 215–255 (EVPS…DPLL), 264–308 (THTD…QLQL), 390–430 (PHGG…PLTS), 433–473 (LSLK…QKPT), and 480–520 (QDES…TEQG).

The protein belongs to the dynein light intermediate chain family. As to quaternary structure, the cytoplasmic dynein 2 complex consists of two catalytic heavy chains (HCs) and a number of non-catalytic subunits presented by intermediate chains (ICs), light intermediate chains (LICs) and light chains (LCs). Among them, a heavy chain (DYNC2H1), two intermediate chains (DYNC2I2 and DYNC2I1), a light intermediate chain (DYNC2LI1), and a light chain (DYNLT2B) are unique to the cytoplasmic dynein complex 2, but a subset of the light chains are also shared by dynein-1 and dynein-2 complexes. Interacts with DYNC2I1; their C-terminal domains each bind a copy of the heavy chain, and their extended N-terminal regions are held together by an array of light chain dimers. Interacts with DYNLL2; this interaction is essential for dynein-2-mediated retrograde trafficking of ciliary proteins. Interacts with DYNLRB1; this interaction is essential for dynein-2-mediated retrograde trafficking of ciliary proteins. Interacts (via the WD domains) with MAP3K7 and TAB3. Interacts (via WD domains) with TAB2 (via C-terminus). Interacts (via WD domains) with TRAF6 (via TRAF-type domains). Expressed in several cell lines (at protein level).

It is found in the cytoplasm. The protein localises to the cytoskeleton. It localises to the cilium basal body. Its subcellular location is the cilium axoneme. The protein resides in the microtubule organizing center. It is found in the centrosome. The protein localises to the cell projection. It localises to the cilium. Its subcellular location is the filopodium. Acts as one of several non-catalytic accessory components of the cytoplasmic dynein 2 complex (dynein-2 complex), a motor protein complex that drives the movement of cargos along microtubules within cilia and flagella in concert with the intraflagellar transport (IFT) system. DYNC2I2 plays a major role in retrograde ciliary protein trafficking and in ciliogenesis. Required also to maintain a functional transition zone. Its function is as follows. Acts as a negative regulator of the Toll-like and IL-1R receptor signaling pathways. Inhibits the MAP3K7-induced NF-kappa-B activation pathway. Inhibits MAP3K7 phosphorylation at 'Thr-184' and 'Thr-187' upon Il-1 beta stimulation. This chain is Cytoplasmic dynein 2 intermediate chain 2, found in Homo sapiens (Human).